Reading from the N-terminus, the 208-residue chain is Proteasome subunit beta 2 (208 aa).

The propeptide at 1 to 9 is removed in mature form; by autocatalysis; sequence MSGKKIVSK. Residue threonine 10 is the Nucleophile of the active site.

The protein belongs to the peptidase T1B family. The 20S proteasome core is composed of 14 alpha and 14 beta subunits that assemble into four stacked heptameric rings, resulting in a barrel-shaped structure. The two inner rings, each composed of seven catalytic beta subunits, are sandwiched by two outer rings, each composed of seven alpha subunits. The catalytic chamber with the active sites is on the inside of the barrel. Has a gated structure, the ends of the cylinder being occluded by the N-termini of the alpha-subunits. Is capped at one or both ends by the proteasome regulatory ATPase, PAN.

It localises to the cytoplasm. It carries out the reaction Cleavage of peptide bonds with very broad specificity.. Its activity is regulated as follows. The formation of the proteasomal ATPase PAN-20S proteasome complex, via the docking of the C-termini of PAN into the intersubunit pockets in the alpha-rings, triggers opening of the gate for substrate entry. Interconversion between the open-gate and close-gate conformations leads to a dynamic regulation of the 20S proteasome proteolysis activity. Its function is as follows. Component of the proteasome core, a large protease complex with broad specificity involved in protein degradation. This Staphylothermus marinus (strain ATCC 43588 / DSM 3639 / JCM 9404 / F1) protein is Proteasome subunit beta 2.